The sequence spans 116 residues: uncharacterized protein (116 aa).

This is an uncharacterized protein from Saccharolobus islandicus (Sulfolobus islandicus).